The sequence spans 260 residues: Global transcriptional regulator CodY (260 aa).

Residues 1–159 (MPNLLEKTRK…SSTVVGIQLL (159 aa)) are GAF domain. A DNA-binding region (H-T-H motif) is located at residues 207-226 (ASVIADRIGITRSVIVNALR).

The protein belongs to the CodY family.

Its subcellular location is the cytoplasm. DNA-binding global transcriptional regulator which is involved in the adaptive response to starvation and acts by directly or indirectly controlling the expression of numerous genes in response to nutrient availability. During rapid exponential growth, CodY is highly active and represses genes whose products allow adaptation to nutrient depletion. The chain is Global transcriptional regulator CodY from Streptococcus pyogenes serotype M3 (strain SSI-1).